Reading from the N-terminus, the 110-residue chain is Keratin-associated protein 6-3 (110 aa).

This sequence belongs to the KRTAP type 6 family. As to quaternary structure, interacts with hair keratins.

Functionally, in the hair cortex, hair keratin intermediate filaments are embedded in an interfilamentous matrix, consisting of hair keratin-associated proteins (KRTAP), which are essential for the formation of a rigid and resistant hair shaft through their extensive disulfide bond cross-linking with abundant cysteine residues of hair keratins. The matrix proteins include the high-sulfur and high-glycine-tyrosine keratins. The protein is Keratin-associated protein 6-3 of Homo sapiens (Human).